The chain runs to 389 residues: NAD-dependent protein deacetylase sirtuin-2 (389 aa).

The interval 1–34 (MAEPDPSHPLETQAGKVQEAQDSDSDSEGGAAGG) is disordered. At alanine 2 the chain carries N-acetylalanine. Serine 23, serine 25, serine 27, and serine 53 each carry phosphoserine. Positions 57–338 (RLLDELTLEG…LALAELLGWK (282 aa)) constitute a Deacetylase sirtuin-type domain. NAD(+)-binding positions include 85–89 (AGIST) and 95–97 (DFR). The residue at position 100 (serine 100) is a Phosphoserine. Residue 167–170 (QNID) coordinates NAD(+). Histidine 187 acts as the Proton acceptor in catalysis. Cysteine 195 and cysteine 200 together coordinate Zn(2+). Serine 207 carries the post-translational modification Phosphoserine. Residues cysteine 221 and cysteine 224 each coordinate Zn(2+). NAD(+) is bound by residues 262-263 (TS), 286-288 (NKE), and cysteine 324. Residues 350–389 (ASIDAQSGAEAPNPSTSASPRKSPPPAQDEARTTEREKPQ) form a disordered region. A phosphoserine mark is found at serine 368 and serine 372. Positions 378–389 (DEARTTEREKPQ) are enriched in basic and acidic residues.

It belongs to the sirtuin family. Class I subfamily. As to quaternary structure, interacts with CDC20, FOXO3 and FZR1. Associates with microtubules in primary cortical mature neurons. Homotrimer. Interacts (via both phosphorylated, unphosphorylated, active or inactive forms) with HDAC6; the interaction is necessary for the complex to interact with alpha-tubulin, suggesting that these proteins belong to a large complex that deacetylates the cytoskeleton. Interacts with FOXO1; the interaction is disrupted upon serum-starvation or oxidative stress, leading to increased level of acetylated FOXO1 and induction of autophagy. Interacts with RELA; the interaction occurs in the cytoplasm and is increased in a TNF-alpha-dependent manner. Interacts with HOXA10; the interaction is direct. Interacts with YWHAB and YWHAG; the interactions occur in a AKT-dependent manner and increase SIRT2-dependent TP53 deacetylation. Interacts with MAPK1/ERK2 and MAPK3/ERK1; the interactions increase SIRT2 stability and deacetylation activity. Interacts (phosphorylated form) with KMT5A isoform 2; the interaction is direct, stimulates KMT5A-mediated methyltransferase activity on histone at 'Lys-20' (H4K20me1) and is increased in a H(2)O(2)-induced oxidative stress-dependent manner. Interacts with G6PD; the interaction is enhanced by H(2)O(2) treatment. Interacts with a G1/S-specific cyclin E-CDK2 complex. Interacts with AURKA, CDK5R1 (p35 form) and CDK5 and HIF1A. Interacts with the tRNA ligase SARS1; recruited to the VEGFA promoter via interaction with SARS1. Interacts with BEX4; negatively regulates alpha-tubulin deacetylation by SIRT2. Zn(2+) is required as a cofactor. Post-translationally, phosphorylated at phosphoserine and phosphothreonine. Phosphorylated at Ser-368 by a mitotic kinase CDK1/cyclin B at the G2/M transition; phosphorylation regulates the delay in cell-cycle progression. Phosphorylated at Ser-368 by a mitotic kinase G1/S-specific cyclin E/Cdk2 complex; phosphorylation inactivates SIRT2-mediated alpha-tubulin deacetylation and thereby negatively regulates cell adhesion, cell migration and neurite outgrowth during neuronal differentiation. Phosphorylated by cyclin A/Cdk2 and p35-Cdk5 complexes and to a lesser extent by the cyclin D3/Cdk4 and cyclin B/Cdk1, in vitro. Dephosphorylated at Ser-368 by CDC14A and CDC14B around early anaphase. Acetylated by EP300; acetylation leads both to the decreased of SIRT2-mediated alpha-tubulin deacetylase activity and SIRT2-mediated down-regulation of TP53 transcriptional activity. In terms of processing, ubiquitinated.

Its subcellular location is the nucleus. It localises to the cytoplasm. The protein localises to the perinuclear region. The protein resides in the cytoskeleton. It is found in the microtubule organizing center. Its subcellular location is the centrosome. It localises to the centriole. The protein localises to the spindle. The protein resides in the midbody. It is found in the chromosome. Its subcellular location is the perikaryon. It localises to the cell projection. The protein localises to the growth cone. The protein resides in the myelin membrane. It carries out the reaction N(6)-acetyl-L-lysyl-[protein] + NAD(+) + H2O = 2''-O-acetyl-ADP-D-ribose + nicotinamide + L-lysyl-[protein]. The catalysed reaction is N(6)-tetradecanoyl-L-lysyl-[protein] + NAD(+) + H2O = 2''-O-tetradecanoyl-ADP-D-ribose + nicotinamide + L-lysyl-[protein]. It catalyses the reaction N(6)-hexadecanoyl-L-lysyl-[protein] + NAD(+) + H2O = 2''-O-hexadecanoyl-ADP-D-ribose + nicotinamide + L-lysyl-[protein]. Its activity is regulated as follows. Inhibited by Sirtinol, A3 and M15 small molecules. Inhibited by nicotinamide. In terms of biological role, NAD-dependent protein deacetylase, which deacetylates internal lysines on histone and alpha-tubulin as well as many other proteins such as key transcription factors. Participates in the modulation of multiple and diverse biological processes such as cell cycle control, genomic integrity, microtubule dynamics, cell differentiation, metabolic networks, and autophagy. Plays a major role in the control of cell cycle progression and genomic stability. Functions in the antephase checkpoint preventing precocious mitotic entry in response to microtubule stress agents, and hence allowing proper inheritance of chromosomes. Positively regulates the anaphase promoting complex/cyclosome (APC/C) ubiquitin ligase complex activity by deacetylating CDC20 and FZR1, then allowing progression through mitosis. Associates both with chromatin at transcriptional start sites (TSSs) and enhancers of active genes. Plays a role in cell cycle and chromatin compaction through epigenetic modulation of the regulation of histone H4 'Lys-20' methylation (H4K20me1) during early mitosis. Specifically deacetylates histone H4 at 'Lys-16' (H4K16ac) between the G2/M transition and metaphase enabling H4K20me1 deposition by KMT5A leading to ulterior levels of H4K20me2 and H4K20me3 deposition throughout cell cycle, and mitotic S-phase progression. Deacetylates KMT5A modulating KMT5A chromatin localization during the mitotic stress response. Also deacetylates histone H3 at 'Lys-57' (H3K56ac) during the mitotic G2/M transition. During oocyte meiosis progression, may deacetylate histone H4 at 'Lys-16' (H4K16ac) and alpha-tubulin, regulating spindle assembly and chromosome alignment by influencing microtubule dynamics and kinetochore function. Deacetylates histone H4 at 'Lys-16' (H4K16ac) at the VEGFA promoter and thereby contributes to regulate expression of VEGFA, a key regulator of angiogenesis. Deacetylates alpha-tubulin at 'Lys-40' and hence controls neuronal motility, oligodendroglial cell arbor projection processes and proliferation of non-neuronal cells. Phosphorylation at Ser-368 by a G1/S-specific cyclin E-CDK2 complex inactivates SIRT2-mediated alpha-tubulin deacetylation, negatively regulating cell adhesion, cell migration and neurite outgrowth during neuronal differentiation. Deacetylates PARD3 and participates in the regulation of Schwann cell peripheral myelination formation during early postnatal development and during postinjury remyelination. Involved in several cellular metabolic pathways. Plays a role in the regulation of blood glucose homeostasis by deacetylating and stabilizing phosphoenolpyruvate carboxykinase PCK1 activity in response to low nutrient availability. Acts as a key regulator in the pentose phosphate pathway (PPP) by deacetylating and activating the glucose-6-phosphate G6PD enzyme, and therefore, stimulates the production of cytosolic NADPH to counteract oxidative damage. Maintains energy homeostasis in response to nutrient deprivation as well as energy expenditure by inhibiting adipogenesis and promoting lipolysis. Attenuates adipocyte differentiation by deacetylating and promoting FOXO1 interaction to PPARG and subsequent repression of PPARG-dependent transcriptional activity. Plays a role in the regulation of lysosome-mediated degradation of protein aggregates by autophagy in neuronal cells. Deacetylates FOXO1 in response to oxidative stress or serum deprivation, thereby negatively regulating FOXO1-mediated autophagy. Deacetylates a broad range of transcription factors and co-regulators regulating target gene expression. Deacetylates transcriptional factor FOXO3 stimulating the ubiquitin ligase SCF(SKP2)-mediated FOXO3 ubiquitination and degradation. Deacetylates HIF1A and therefore promotes HIF1A degradation and inhibition of HIF1A transcriptional activity in tumor cells in response to hypoxia. Deacetylates RELA in the cytoplasm inhibiting NF-kappaB-dependent transcription activation upon TNF-alpha stimulation. Inhibits transcriptional activation by deacetylating p53/TP53 and EP300. Also deacetylates EIF5A. Functions as a negative regulator on oxidative stress-tolerance in response to anoxia-reoxygenation conditions. Plays a role as tumor suppressor. In addition to protein deacetylase activity, also has activity toward long-chain fatty acyl groups and mediates protein-lysine demyristoylation and depalmitoylation of target proteins, such as ARF6 and KRAS, thereby regulating their association with membranes. This Macaca fascicularis (Crab-eating macaque) protein is NAD-dependent protein deacetylase sirtuin-2 (SIRT2).